Reading from the N-terminus, the 152-residue chain is MRDIKAIESVVADGLANQGYEVVDLIVQNQGSKKLFQFFVDKEGGINLDDVEKASRLIDSIIEMENLIEGAYILEASSPGIKRVLKKPEHFKKFIGQRAKITLKQMIENRANFTGLIAGANETEMTLDDGTTQFKFKYEDIKKANLDPVLEF.

The protein belongs to the RimP family.

It localises to the cytoplasm. Required for maturation of 30S ribosomal subunits. In Elusimicrobium minutum (strain Pei191), this protein is Ribosome maturation factor RimP.